The sequence spans 444 residues: Putative dipeptidase CPC735_015490 (444 aa).

An N-terminal signal peptide occupies residues 1 to 34 (MSQRTEHNGSWLRNAGSLLSVLACVAVLASPASA). Zn(2+) contacts are provided by His-67, Asp-69, and Glu-178. Cys-118 and Cys-207 are joined by a disulfide. His-205 provides a ligand contact to substrate. Zn(2+) is bound by residues His-250 and His-271. Substrate-binding residues include Arg-282 and Asp-342. The N-linked (GlcNAc...) asparagine glycan is linked to Asn-413.

It belongs to the metallo-dependent hydrolases superfamily. Peptidase M19 family. Zn(2+) serves as cofactor.

It catalyses the reaction an L-aminoacyl-L-amino acid + H2O = 2 an L-alpha-amino acid. Functionally, hydrolyzes a wide range of dipeptides. The sequence is that of Putative dipeptidase CPC735_015490 from Coccidioides posadasii (strain C735) (Valley fever fungus).